The following is a 266-amino-acid chain: HLA class II histocompatibility antigen, DRB1 beta chain (266 aa).

An N-terminal signal peptide occupies residues 1 to 29 (MVCLKLPGGSCMTALTVTLMVLSSPLALS). The interval 30–124 (GDTRPRFLWQ…VESFTVQRRV (95 aa)) is beta-1. Residues 30 to 227 (GDTRPRFLWQ…RARSESAQSK (198 aa)) lie on the Extracellular side of the membrane. An intrachain disulfide couples Cys-44 to Cys-108. An N-linked (GlcNAc...) asparagine glycan is attached at Asn-48. A peptide antigen-binding residues include Asp-86, Trp-90, His-110, Asn-111, and Arg-122. Positions 125-227 (QPKVTVYPSK…RARSESAQSK (103 aa)) are beta-2. Positions 126–214 (PKVTVYPSKT…EHPSVTSPLT (89 aa)) constitute an Ig-like C1-type domain. Cysteines 146 and 202 form a disulfide. A helical membrane pass occupies residues 228-248 (MLSGVGGFVLGLLFLGAGLFI). The Cytoplasmic portion of the chain corresponds to 249–266 (YFRNQKGHSGLQPTGFLS). Lys-254 participates in a covalent cross-link: Glycyl lysine isopeptide (Lys-Gly) (interchain with G-Cter in ubiquitin).

In terms of assembly, heterotrimer that consists of an alpha chain HLA-DRA, a beta chain HLA-DRB1 and a peptide (peptide-MHCII). Newly synthesized alpha and beta chains forms a heterodimer (MHCII) that associates with the CD74/invariant chain (Ii) in the endoplasmic reticulum (ER). Ii is a trimer composed of three subunits and each subunit interacts with one MHCII dimer, blocking the peptide-binding cleft. As a result, MHCII molecules cannot bind peptides present in the ER. The complex of MHCII and CD74/Ii is transported in vesicles from ER to Golgi to lysosomes, where it encounters antigenic peptides generated via proteolysis of endocytosed antigens. MHCII dimers are dissociated from CD74/Ii by the combined action of proteolysis and HLA-DM. Lysosomal enzymes such as cathepsin, degrade CD74/Ii leaving a 24 amino acid remnant called class II-associated Ii or CLIP. Interacts (via the peptide binding cleft) with CLIP; this interaction inhibits antigen peptide binding before entry in the endosomal compartment. The displacement of CLIP and replacement by a high affinity peptide in lysosomes is performed by HLA-DM heterodimer. HLA-DM catalyzes CLIP dissociation from MHCII, stabilizes empty MHCII and mediates the selection of high affinity peptides. Interacts with HLA-DM heterodimer; this interaction is direct. Interacts with TCR (via CDR3). Interacts (via beta-2 domain) with CD4 coreceptor (via Ig-like V-type domain); this interaction is of exceptionally low affinity yet necessary for optimal recognition of antigenic peptides. As to quaternary structure, (Microbial infection) Interacts with Staphylococcus aureus enterotoxin A/entA, enterotoxin B/entB, enterotoxin C1/entC1, enterotoxin D/entD and enterotoxin H/entH. Enterotoxins bind outside the peptide-binding cleft of MHCII: enterotoxin H/entH interacts via the beta-1 domain of MHCII and in a zinc-dependent way, whereas enterotoxin B/entB interacts primarily via the alpha-1 domain. (Microbial infection) Interacts with Epstein-Barr virus gp42 protein. Post-translationally, ubiquitinated by MARCHF1 and MARCHF8 at Lys-254 leading to sorting into the endosome system and down-regulation of MHCII. As to expression, expressed in professional APCs: monocyte/macrophages, dendritic cells and B cells (at protein level). Expressed in thymic epithelial cells (at protein level).

It localises to the cell membrane. The protein resides in the endoplasmic reticulum membrane. The protein localises to the lysosome membrane. Its subcellular location is the late endosome membrane. It is found in the autolysosome membrane. Functionally, a beta chain of antigen-presenting major histocompatibility complex class II (MHCII) molecule. In complex with the alpha chain HLA-DRA, displays antigenic peptides on professional antigen presenting cells (APCs) for recognition by alpha-beta T cell receptor (TCR) on HLA-DRB1-restricted CD4-positive T cells. This guides antigen-specific T-helper effector functions, both antibody-mediated immune response and macrophage activation, to ultimately eliminate the infectious agents and transformed cells. Typically presents extracellular peptide antigens of 10 to 30 amino acids that arise from proteolysis of endocytosed antigens in lysosomes. In the tumor microenvironment, presents antigenic peptides that are primarily generated in tumor-resident APCs likely via phagocytosis of apoptotic tumor cells or macropinocytosis of secreted tumor proteins. Presents peptides derived from intracellular proteins that are trapped in autolysosomes after macroautophagy, a mechanism especially relevant for T cell selection in the thymus and central immune tolerance. The selection of the immunodominant epitopes follows two processing modes: 'bind first, cut/trim later' for pathogen-derived antigenic peptides and 'cut first, bind later' for autoantigens/self-peptides. The anchor residue at position 1 of the peptide N-terminus, usually a large hydrophobic residue, is essential for high affinity interaction with MHCII molecules. Its function is as follows. Allele DRB1*01:01: Displays an immunodominant epitope derived from Bacillus anthracis pagA/protective antigen, PA (KLPLYISNPNYKVNVYAVT), to both naive and PA-specific memory CD4-positive T cells. Presents immunodominant HIV-1 gag peptide (FRDYVDRFYKTLRAEQASQE) on infected dendritic cells for recognition by TRAV24-TRBV2 TCR on CD4-positive T cells and controls viral load. May present to T-helper 1 cells several HRV-16 epitopes derived from capsid proteins VP1 (PRFSLPFLSIASAYYMFYDG) and VP2 (PHQFINLRSNNSATLIVPYV), contributing to viral clearance. Displays commonly recognized peptides derived from IAV external protein HA (PKYVKQNTLKLAT and SNGNFIAPEYAYKIVK) and from internal proteins M, NP and PB1, with M-derived epitope (GLIYNRMGAVTTEV) being the most immunogenic. Presents a self-peptide derived from COL4A3 (GWISLWKGFSF) to TCR (TRAV14 biased) on CD4-positive, FOXP3-positive regulatory T cells and mediates immune tolerance to self. May present peptides derived from oncofetal trophoblast glycoprotein TPBG 5T4, known to be recognized by both T-helper 1 and regulatory T cells. Displays with low affinity a self-peptide derived from MBP (VHFFKNIVTPRTP). Allele DRB1*03:01: May present to T-helper 1 cells an HRV-16 epitope derived from capsid protein VP2 (NEKQPSDDNWLNFDGTLLGN), contributing to viral clearance. Displays self-peptides derived from retinal SAG (NRERRGIALDGKIKHE) and thyroid TG (LSSVVVDPSIRHFDV). Presents viral epitopes derived from HHV-6B gH/U48 and U85 antigens to polyfunctional CD4-positive T cells with cytotoxic activity implicated in control of HHV-6B infection. Presents several immunogenic epitopes derived from C.tetani neurotoxin tetX, playing a role in immune recognition and long-term protection. In terms of biological role, allele DRB1*04:01: Presents an immunodominant bacterial epitope derived from M.tuberculosis esxB/culture filtrate antigen CFP-10 (EISTNIRQAGVQYSR), eliciting CD4-positive T cell effector functions such as IFNG production and cytotoxic activity. May present to T-helper 1 cells an HRV-16 epitope derived from capsid protein VP2 (NEKQPSDDNWLNFDGTLLGN), contributing to viral clearance. Presents tumor epitopes derived from melanoma-associated TYR antigen (QNILLSNAPLGPQFP and DYSYLQDSDPDSFQD), triggering CD4-positive T cell effector functions such as GMCSF production. Displays preferentially citrullinated self-peptides derived from VIM (GVYATR/citSSAVR and SAVRAR/citSSVPGVR) and ACAN (VVLLVATEGR/ CitVRVNSAYQDK). Displays self-peptides derived from COL2A1. Functionally, allele DRB1*04:02: Displays native or citrullinated self-peptides derived from VIM. Its function is as follows. Allele DRB1*04:04: May present to T-helper 1 cells several HRV-16 epitopes derived from capsid proteins VP1 (HIVMQYMYVPPGAPIPTTRN) and VP2 (RGDSTITSQDVANAVVGYGV), contributing to viral clearance. Displays preferentially citrullinated self-peptides derived from VIM (SAVRAR/citSSVPGVR). Allele DRB1*04:05: May present to T-helper 1 cells an immunogenic epitope derived from tumor-associated antigen WT1 (KRYFKLSHLQMHSRKH), likely providing for effective antitumor immunity in a wide range of solid and hematological malignancies. In terms of biological role, allele DRB1*05:01: Presents an immunodominant HIV-1 gag peptide (FRDYVDRFYKTLRAEQASQE) on infected dendritic cells for recognition by TRAV24-TRBV2 TCR on CD4-positive T cells and controls viral load. Functionally, allele DRB1*07:01: Upon EBV infection, presents latent antigen EBNA2 peptide (PRSPTVFYNIPPMPLPPSQL) to CD4-positive T cells, driving oligoclonal expansion and selection of a dominant virus-specific memory T cell subset with cytotoxic potential to directly eliminate virus-infected B cells. May present to T-helper 1 cells several HRV-16 epitopes derived from capsid proteins VP1 (PRFSLPFLSIASAYYMFYDG) and VP2 (VPYVNAVPMDSMVRHNNWSL), contributing to viral clearance. In the context of tumor immunesurveillance, may present to T-helper 1 cells an immunogenic epitope derived from tumor-associated antigen WT1 (MTEYKLVVVGAVGVGKSALTIQLI), likely providing for effective antitumor immunity in a wide range of solid and hematological malignancies. In metastatic epithelial tumors, presents to intratumoral CD4-positive T cells a KRAS neoantigen (MTEYKLVVVGAVGVGKSALTIQLI) carrying G12V hotspot driver mutation and may mediate tumor regression. Its function is as follows. Allele DRB1*11:01: Displays an immunodominant HIV-1 gag peptide (FRDYVDRFYKTLRAEQASQE) on infected dendritic cells for recognition by TRAV24-TRBV2 TCR on CD4-positive T cells and controls viral load. May present to T-helper 1 cells an HRV-16 epitope derived from capsid protein VP2 (SDRIIQITRGDSTITSQDVA), contributing to viral clearance. Presents several immunogenic epitopes derived from C.tetani neurotoxin tetX, playing a role in immune recognition and longterm protection. In the context of tumor immunesurveillance, may present tumor-derived neoantigens to CD4-positive T cells and trigger anti-tumor helper functions. Allele DRB1*13:01: Presents viral epitopes derived from HHV-6B antigens to polyfunctional CD4-positive T cells implicated in control of HHV-6B infection. In terms of biological role, allele DRB1*15:01: May present to T-helper 1 cells an HRV-16 epitope derived from capsid protein VP2 (SNNSATLIVPYVNAVPMDSM), contributing to viral clearance. Displays a self-peptide derived from MBP (ENPVVHFFKNIVTPR). May present to T-helper 1 cells an immunogenic epitope derived from tumor-associated antigen WT1 (KRYFKLSHLQMHSRKH), likely providing for effective antitumor immunity in a wide range of solid and hematological malignancies. Functionally, allele DRB1*15:02: Displays an immunodominant HIV-1 gag peptide (FRDYVDRFYKTLRAEQASQE) on infected dendritic cells for recognition by TRAV24-TRBV2 TCR on CD4-positive T cells and controls viral load. May present to T-helper 1 cells an immunogenic epitope derived from tumor-associated antigen WT1 (KRYFKLSHLQMHSRKH), likely providing for effective antitumor immunity in a wide range of solid and hematological malignancies. Its function is as follows. (Microbial infection) Acts as a receptor for Epstein-Barr virus on lymphocytes. This chain is HLA class II histocompatibility antigen, DRB1 beta chain, found in Homo sapiens (Human).